A 586-amino-acid polypeptide reads, in one-letter code: CTP synthase (586 aa).

Positions 1 to 278 (MRKHPQTATK…DAFVVRRLNL (278 aa)) are amidoligase domain. S20 contributes to the CTP binding site. A UTP-binding site is contributed by S20. ATP contacts are provided by residues 21 to 26 (SLGKGL) and D78. Positions 78 and 152 each coordinate Mg(2+). Residues 159–161 (DIE), 199–204 (KTKPTQ), and K235 each bind CTP. Residues 199-204 (KTKPTQ) and K235 contribute to the UTP site. The region spanning 303–551 (RIALVGKYVE…VGAAIDYKAG (249 aa)) is the Glutamine amidotransferase type-1 domain. G366 contributes to the L-glutamine binding site. Catalysis depends on C393, which acts as the Nucleophile; for glutamine hydrolysis. Residues 394-397 (LGLQ), E416, and R477 contribute to the L-glutamine site. Residues H524 and E526 contribute to the active site. Positions 560-586 (EIPEHTPNGSSHRDGVGQPLPEPASRG) are disordered.

Belongs to the CTP synthase family. In terms of assembly, homotetramer.

The enzyme catalyses UTP + L-glutamine + ATP + H2O = CTP + L-glutamate + ADP + phosphate + 2 H(+). It catalyses the reaction L-glutamine + H2O = L-glutamate + NH4(+). It carries out the reaction UTP + NH4(+) + ATP = CTP + ADP + phosphate + 2 H(+). It functions in the pathway pyrimidine metabolism; CTP biosynthesis via de novo pathway; CTP from UDP: step 2/2. With respect to regulation, allosterically activated by GTP, when glutamine is the substrate; GTP has no effect on the reaction when ammonia is the substrate. The allosteric effector GTP functions by stabilizing the protein conformation that binds the tetrahedral intermediate(s) formed during glutamine hydrolysis. Inhibited by the product CTP, via allosteric rather than competitive inhibition. Functionally, catalyzes the ATP-dependent amination of UTP to CTP with either L-glutamine or ammonia as the source of nitrogen. Regulates intracellular CTP levels through interactions with the four ribonucleotide triphosphates. This chain is CTP synthase, found in Mycobacterium tuberculosis (strain ATCC 25177 / H37Ra).